Consider the following 349-residue polypeptide: 4-hydroxy-3-methylbut-2-en-1-yl diphosphate synthase (flavodoxin) (349 aa).

Cys265, Cys268, Cys300, and Glu307 together coordinate [4Fe-4S] cluster.

Belongs to the IspG family. [4Fe-4S] cluster is required as a cofactor.

The enzyme catalyses (2E)-4-hydroxy-3-methylbut-2-enyl diphosphate + oxidized [flavodoxin] + H2O + 2 H(+) = 2-C-methyl-D-erythritol 2,4-cyclic diphosphate + reduced [flavodoxin]. It functions in the pathway isoprenoid biosynthesis; isopentenyl diphosphate biosynthesis via DXP pathway; isopentenyl diphosphate from 1-deoxy-D-xylulose 5-phosphate: step 5/6. Converts 2C-methyl-D-erythritol 2,4-cyclodiphosphate (ME-2,4cPP) into 1-hydroxy-2-methyl-2-(E)-butenyl 4-diphosphate. This chain is 4-hydroxy-3-methylbut-2-en-1-yl diphosphate synthase (flavodoxin), found in Thermodesulfovibrio yellowstonii (strain ATCC 51303 / DSM 11347 / YP87).